The chain runs to 354 residues: UDP-N-acetylglucosamine--N-acetylmuramyl-(pentapeptide) pyrophosphoryl-undecaprenol N-acetylglucosamine transferase (354 aa).

UDP-N-acetyl-alpha-D-glucosamine-binding positions include 11–13 (SAG), Arg164, Ser194, and Gln289.

This sequence belongs to the glycosyltransferase 28 family. MurG subfamily.

The protein localises to the cell membrane. It carries out the reaction di-trans,octa-cis-undecaprenyl diphospho-N-acetyl-alpha-D-muramoyl-L-alanyl-D-glutamyl-meso-2,6-diaminopimeloyl-D-alanyl-D-alanine + UDP-N-acetyl-alpha-D-glucosamine = di-trans,octa-cis-undecaprenyl diphospho-[N-acetyl-alpha-D-glucosaminyl-(1-&gt;4)]-N-acetyl-alpha-D-muramoyl-L-alanyl-D-glutamyl-meso-2,6-diaminopimeloyl-D-alanyl-D-alanine + UDP + H(+). It participates in cell wall biogenesis; peptidoglycan biosynthesis. Functionally, cell wall formation. Catalyzes the transfer of a GlcNAc subunit on undecaprenyl-pyrophosphoryl-MurNAc-pentapeptide (lipid intermediate I) to form undecaprenyl-pyrophosphoryl-MurNAc-(pentapeptide)GlcNAc (lipid intermediate II). The sequence is that of UDP-N-acetylglucosamine--N-acetylmuramyl-(pentapeptide) pyrophosphoryl-undecaprenol N-acetylglucosamine transferase from Shouchella clausii (strain KSM-K16) (Alkalihalobacillus clausii).